The primary structure comprises 455 residues: MASSASLETMVPPACPRAGASPATSKTLAFSIERIMAKTSEPRAPFEPRPAALEADSSQSKKLLNLCSPLPCMIPLQPLGYEVPSKTLLSYSEFWKSSLRAGGGGGGGSGGGAPVCGASGLCKTNCGVCCKAELGLAPSALPAGRVIKPQVINQAVGLPASGSLYYFNYLDSTAYPPSELLGGHLFPSGLLNAQAPTSLAAHPKLFLLENAKLASLAADKFPHPASYPHKERLHAPLEQVLKENSALTAERGGVKSHSKLPGGSTDSKPKNFTCEVCGKVFNAHYNLTRHMPVHTGARPFVCKVCGKGFRQASTLCRHKIIHTQEKPHKCNQCGKAFNRSSTLNTHIRIHAGYKPFVCEFCGKGFHQKGNYKNHKLTHSGEKQYKCTICNKAFHQVYNLTFHMHTHNDKKPFTCATCGKGFCRNFDLKKHVRKLHDSVGPTATPSAKDLARTVQS.

Residues 1 to 22 (MASSASLETMVPPACPRAGASP) are disordered. Positions 27 to 42 (TLAFSIERIMAKTSEP) match the Engrailed homology 1 repressor motif. C2H2-type zinc fingers lie at residues 272–294 (FTCE…MPVH), 300–322 (FVCK…KIIH), 328–350 (HKCN…IRIH), 356–378 (FVCE…KLTH), 384–406 (YKCT…MHTH), and 412–435 (FTCA…RKLH).

Belongs to the krueppel C2H2-type zinc-finger protein family. In terms of tissue distribution, highly expressed in neocortical layer V, moderately expressed in layer VI. Expressed in subcortically projecting neurons.

Its subcellular location is the nucleus. In terms of biological role, transcription repressor. Required for the specification of corticospinal motor neurons and other subcerebral projection neurons. May play a role in layer and neuronal subtype-specific patterning of subcortical projections and axonal fasciculation. Controls the development of dendritic arborization and spines of large layer V pyramidal neurons. Plays a role in rostro-caudal patterning of the diencephalon and in prethalamic formation. The sequence is that of Fez family zinc finger protein 2 (Fezf2) from Mus musculus (Mouse).